The primary structure comprises 467 residues: Solute carrier family 52, riboflavin transporter, member 3 (467 aa).

The Cytoplasmic segment spans residues Met1–Ala2. The helical transmembrane segment at Phe3–Leu23 threads the bilayer. The Extracellular segment spans residues Trp24–Tyr43. Residues Leu44 to Phe64 form a helical membrane-spanning segment. At Arg65–Glu71 the chain is on the cytoplasmic side. The chain crosses the membrane as a helical span at residues Val72–Leu92. The Extracellular segment spans residues Trp93–Ser105. Asn94 is a glycosylation site (N-linked (GlcNAc...) asparagine). A helical transmembrane segment spans residues Ile106–Phe126. Over Leu127–Tyr137 the chain is Cytoplasmic. Residues Leu138 to Ala158 traverse the membrane as a helical segment. Topologically, residues Gln159 to Pro220 are extracellular. A glycan (N-linked (GlcNAc...) asparagine) is linked at Asn168. Residues Leu221 to Leu241 traverse the membrane as a helical segment. The Cytoplasmic portion of the chain corresponds to Gln242 to His294. Phosphoserine is present on Ser251. The tract at residues Arg266 to Glu288 is disordered. Residues Gln268–Glu288 show a composition bias toward basic and acidic residues. The chain crosses the membrane as a helical span at residues Leu295–Val315. The Extracellular segment spans residues Leu316–His333. A helical membrane pass occupies residues Leu334–Pro354. Topologically, residues Asn355–Pro359 are cytoplasmic. Residues Phe360–Val380 traverse the membrane as a helical segment. Over Met381 to Glu394 the chain is Extracellular. A helical transmembrane segment spans residues Val395–Leu415. Over Gly416–Ser425 the chain is Cytoplasmic. Residues Ala426 to Phe446 form a helical membrane-spanning segment. Topologically, residues Pro447–Ala467 are extracellular.

Belongs to the riboflavin transporter family.

It localises to the cell membrane. The enzyme catalyses riboflavin(in) = riboflavin(out). Functionally, plasma membrane transporter mediating the uptake by cells of the water soluble vitamin B2/riboflavin that plays a key role in biochemical oxidation-reduction reactions of the carbohydrate, lipid, and amino acid metabolism. This is Solute carrier family 52, riboflavin transporter, member 3 (SLC52A3) from Bos taurus (Bovine).